The primary structure comprises 411 residues: Protrudin (411 aa).

The segment at 1 to 27 (MQTSEREGSGPELSPSVMPEAPLESPP) is disordered. At 1-66 (MQTSEREGSG…AGDGVRYLLR (66 aa)) the chain is on the cytoplasmic side. The interval 1 to 92 (MQTSEREGSG…LFLTLNEGAW (92 aa)) is sufficient for homooligomerization. The tract at residues 1 to 205 (MQTSEREGSG…LYLLPLCWVL (205 aa)) is sufficient for localization to endoplasmic reticulum tubular network and for interactions with REEP1, REEP5, ATL1, ATL2, ATL3 and SPAST. The interval 51 to 64 (LEPLKDAGDGVRYL) is necessary for interaction with RAB11A and function in neurite outgrowth. A helical membrane pass occupies residues 67 to 87 (WQMPLCSLLTCLGLNVLFLTL). Residue Asn-88 is a topological domain, lumenal. The chain crosses the membrane as a helical span at residues 89–109 (EGAWYSVGALMISVPALLGYL). The Cytoplasmic portion of the chain corresponds to 110–187 (QEVCRARLPE…NPVVSSQFYG (78 aa)). An intramembrane region (helical) is located at residues 188–208 (ALLGTICMLYLLPLCWVLTLL). Residues 209-411 (NSTLFLGNVE…CASCNQTLSK (203 aa)) are Cytoplasmic-facing. The disordered stretch occupies residues 234–286 (MNPKQEEHAFESPPPPDVGGKGGLMDSTPALTPTEDLTPGSVEEAEEAEPDEE). The necessary for interaction with KIF5A stretch occupies residues 271–361 (TPGSVEEAEE…GCSATFSVLK (91 aa)). Residues 276 to 286 (EEAEEAEPDEE) are compositionally biased toward acidic residues. The necessary for interaction with VAPA stretch occupies residues 286–292 (EFKDAIE). The segment at 344–410 (TNNFGNCTGC…VCASCNQTLS (67 aa)) adopts an FYVE-type zinc-finger fold. 8 residues coordinate Zn(2+): Cys-350, Cys-353, Cys-366, Cys-369, Cys-374, Cys-377, Cys-402, and Cys-405.

Can form homooligomers (monomers, dimers and tetramers). Interacts with RAB11A (GDP-bound form); regulates RAB11A. Interacts with FKBP8; may negatively regulate ZFYVE27 phosphorylation. Interacts with VAPA (via MSP domain); may regulate ZFYVE27 retention in the endoplasmic reticulum and its function in cell projections formation. Interacts with VAPB (via MSP domain). Interacts with RAB11B (GDP-bound form), REEP1, REEP5, ATL1, ATL2, ATL3, SPAST, SURF4, KIF5A, KIF5B, KIF5C and RTN3. Post-translationally, phosphorylated. Phosphorylation is induced by NGF through the MAPK/ERK pathway and modulates interaction with RAB11A.

The protein resides in the recycling endosome membrane. It localises to the endoplasmic reticulum membrane. The protein localises to the cell projection. Its subcellular location is the growth cone membrane. Functionally, key regulator of RAB11-dependent vesicular trafficking during neurite extension through polarized membrane transport. Promotes axonal elongation and contributes to the establishment of neuronal cell polarity. Involved in nerve growth factor-induced neurite formation in VAPA-dependent manner. Contributes to both the formation and stabilization of the tubular ER network. Involved in ER morphogenesis by regulating the sheet-to-tubule balance and possibly the density of tubule interconnections. Acts as an adapter protein that facilitates the interaction of KIF5A with VAPA, VAPB, SURF4, RAB11A, RAB11B and RTN3 and the ZFYVE27-KIF5A complex contributes to the transport of these proteins in neurons. Can induce formation of neurite-like membrane protrusions in non-neuronal cells in a KIF5A/B-dependent manner. This chain is Protrudin (ZFYVE27), found in Pongo abelii (Sumatran orangutan).